The primary structure comprises 248 residues: MDIPRIFTISESEHRIHNPFTEEKYATLGRVLRMKPGTRILDLGSGSGEMLCTWARDHGITGTGIDMSSLFTAQAKRRAEELGVSERVHFIHNDAAGYVANEKCDVAACVGATWIAGGFAGAEELLAQSLKPGGIMLIGEPYWRQLPATEEIAQACGVSSTSDFLTLPGLVGAFDDLGYDVVEMVLADQEGWDRYEAAKWLTMRRWLEANPDDDFAAEVRAELNIAPKRYVTYARECFGWGVFALIAR.

The chain crosses the membrane as a helical span at residues 104-122; that stretch reads CDVAACVGATWIAGGFAGA.

It is found in the membrane. This is an uncharacterized protein from Escherichia coli (strain K12).